Consider the following 336-residue polypeptide: GTPase Obg (336 aa).

One can recognise an Obg domain in the interval 1 to 159 (MKFLDETKVY…KTIWLRLKLI (159 aa)). One can recognise an OBG-type G domain in the interval 160-327 (ADAGLVGLPN…TLRALRSVID (168 aa)). GTP-binding positions include 166–173 (GLPNAGKS), 191–195 (FTTLH), 212–215 (DIPG), 279–282 (SQID), and 308–310 (SAV). Mg(2+) contacts are provided by Ser173 and Thr193.

This sequence belongs to the TRAFAC class OBG-HflX-like GTPase superfamily. OBG GTPase family. As to quaternary structure, monomer. Requires Mg(2+) as cofactor.

The protein resides in the cytoplasm. Its function is as follows. An essential GTPase which binds GTP, GDP and possibly (p)ppGpp with moderate affinity, with high nucleotide exchange rates and a fairly low GTP hydrolysis rate. Plays a role in control of the cell cycle, stress response, ribosome biogenesis and in those bacteria that undergo differentiation, in morphogenesis control. The chain is GTPase Obg from Sinorhizobium medicae (strain WSM419) (Ensifer medicae).